The primary structure comprises 198 residues: 3-isopropylmalate dehydratase small subunit (198 aa).

It belongs to the LeuD family. LeuD type 1 subfamily. As to quaternary structure, heterodimer of LeuC and LeuD.

The enzyme catalyses (2R,3S)-3-isopropylmalate = (2S)-2-isopropylmalate. It participates in amino-acid biosynthesis; L-leucine biosynthesis; L-leucine from 3-methyl-2-oxobutanoate: step 2/4. Catalyzes the isomerization between 2-isopropylmalate and 3-isopropylmalate, via the formation of 2-isopropylmaleate. The chain is 3-isopropylmalate dehydratase small subunit (leuD) from Mycobacterium bovis (strain ATCC BAA-935 / AF2122/97).